The sequence spans 325 residues: Fructose-1,6-bisphosphatase class 1 (325 aa).

The Mg(2+) site is built by Glu-84, Asp-103, Leu-105, and Asp-106. Residues 106–109 (DGSS), Asn-196, and Lys-262 each bind substrate. Glu-268 lines the Mg(2+) pocket.

The protein belongs to the FBPase class 1 family. In terms of assembly, homotetramer. Requires Mg(2+) as cofactor.

The protein localises to the cytoplasm. The enzyme catalyses beta-D-fructose 1,6-bisphosphate + H2O = beta-D-fructose 6-phosphate + phosphate. It functions in the pathway carbohydrate biosynthesis; gluconeogenesis. This Shewanella oneidensis (strain ATCC 700550 / JCM 31522 / CIP 106686 / LMG 19005 / NCIMB 14063 / MR-1) protein is Fructose-1,6-bisphosphatase class 1.